A 305-amino-acid chain; its full sequence is Putative ankyrin repeat protein RF_0580 (305 aa).

7 ANK repeats span residues 5-34, 39-68, 72-101, 107-136, 140-169, 173-202, and 206-235; these read YNKNNLFAKLAYGDLSEVQALLKSGVNIDE, RGETALYNTLFTGYMDRAAFLLKHKASPNI, SGQTILYLLVMNNSIDKMKFLFENTTNIDL, CGHSPLHAATFNENIEAMELLLKKGADINS, FGASALHGTIYNNKLKAAELLLNHGADVNA, YEDTILHNIIGTNNIEAAKFLLQNGADVNI, and NNFTPLDRAILGQHKELAELFLKSGATIKI.

The sequence is that of Putative ankyrin repeat protein RF_0580 from Rickettsia felis (strain ATCC VR-1525 / URRWXCal2) (Rickettsia azadi).